Consider the following 222-residue polypeptide: Urease accessory protein UreF (222 aa).

It belongs to the UreF family. As to quaternary structure, ureD, UreF and UreG form a complex that acts as a GTP-hydrolysis-dependent molecular chaperone, activating the urease apoprotein by helping to assemble the nickel containing metallocenter of UreC. The UreE protein probably delivers the nickel.

The protein resides in the cytoplasm. Its function is as follows. Required for maturation of urease via the functional incorporation of the urease nickel metallocenter. The sequence is that of Urease accessory protein UreF from Roseobacter denitrificans (strain ATCC 33942 / OCh 114) (Erythrobacter sp. (strain OCh 114)).